The primary structure comprises 68 residues: Protein transport protein Sec61 subunit gamma (68 aa).

At 1 to 32 the chain is on the cytoplasmic side; it reads MDQVTKFIEPGRQFAKDSIRLVKRCTKPDRKE. The helical transmembrane segment at 33–61 threads the bilayer; the sequence is FQKIAVATAIGFCIMGFIGFFVKLIHIPI. Topologically, residues 62 to 68 are extracellular; the sequence is NNIIVGS.

It belongs to the SecE/SEC61-gamma family. Heterotrimeric complex composed of SEC61-alpha, SEC61-beta and SEC61-gamma.

The protein localises to the endoplasmic reticulum membrane. Necessary for protein translocation in the endoplasmic reticulum. The polypeptide is Protein transport protein Sec61 subunit gamma (SEC61G) (Gryllotalpa orientalis (Oriental mole cricket)).